Here is a 211-residue protein sequence, read N- to C-terminus: Probable nicotinate-nucleotide adenylyltransferase (211 aa).

It belongs to the NadD family.

The catalysed reaction is nicotinate beta-D-ribonucleotide + ATP + H(+) = deamido-NAD(+) + diphosphate. It participates in cofactor biosynthesis; NAD(+) biosynthesis; deamido-NAD(+) from nicotinate D-ribonucleotide: step 1/1. Functionally, catalyzes the reversible adenylation of nicotinate mononucleotide (NaMN) to nicotinic acid adenine dinucleotide (NaAD). In Legionella pneumophila (strain Paris), this protein is Probable nicotinate-nucleotide adenylyltransferase.